The chain runs to 41 residues: Large ribosomal subunit protein bL36 (41 aa).

This sequence belongs to the bacterial ribosomal protein bL36 family.

This chain is Large ribosomal subunit protein bL36, found in Rhodopseudomonas palustris (strain BisA53).